We begin with the raw amino-acid sequence, 368 residues long: tRNA-specific 2-thiouridylase MnmA (368 aa).

Residues 24–31 (AMSGGVDS) and L50 contribute to the ATP site. C117 functions as the Nucleophile in the catalytic mechanism. Residues C117 and C213 are joined by a disulfide bond. An ATP-binding site is contributed by G141. The segment at 163 to 165 (KDQ) is interaction with tRNA. C213 acts as the Cysteine persulfide intermediate in catalysis.

Belongs to the MnmA/TRMU family.

The protein resides in the cytoplasm. It carries out the reaction S-sulfanyl-L-cysteinyl-[protein] + uridine(34) in tRNA + AH2 + ATP = 2-thiouridine(34) in tRNA + L-cysteinyl-[protein] + A + AMP + diphosphate + H(+). Catalyzes the 2-thiolation of uridine at the wobble position (U34) of tRNA, leading to the formation of s(2)U34. The polypeptide is tRNA-specific 2-thiouridylase MnmA (Wolbachia pipientis subsp. Culex pipiens (strain wPip)).